Here is a 159-residue protein sequence, read N- to C-terminus: Protein-export protein SecB (159 aa).

The protein belongs to the SecB family. In terms of assembly, homotetramer, a dimer of dimers. One homotetramer interacts with 1 SecA dimer.

Its subcellular location is the cytoplasm. In terms of biological role, one of the proteins required for the normal export of preproteins out of the cell cytoplasm. It is a molecular chaperone that binds to a subset of precursor proteins, maintaining them in a translocation-competent state. It also specifically binds to its receptor SecA. This is Protein-export protein SecB from Burkholderia mallei (strain NCTC 10229).